We begin with the raw amino-acid sequence, 165 residues long: Ureidoglycolate lyase (165 aa).

It belongs to the ureidoglycolate lyase family. Homodimer. The cofactor is Ni(2+).

It catalyses the reaction (S)-ureidoglycolate = urea + glyoxylate. It functions in the pathway nitrogen metabolism; (S)-allantoin degradation. Its function is as follows. Catalyzes the catabolism of the allantoin degradation intermediate (S)-ureidoglycolate, generating urea and glyoxylate. Involved in the utilization of allantoin as nitrogen source. This is Ureidoglycolate lyase from Chelativorans sp. (strain BNC1).